The primary structure comprises 180 residues: Large ribosomal subunit protein uL6 (180 aa).

This sequence belongs to the universal ribosomal protein uL6 family. Part of the 50S ribosomal subunit.

In terms of biological role, this protein binds to the 23S rRNA, and is important in its secondary structure. It is located near the subunit interface in the base of the L7/L12 stalk, and near the tRNA binding site of the peptidyltransferase center. This chain is Large ribosomal subunit protein uL6, found in Clostridium botulinum (strain Okra / Type B1).